Consider the following 54-residue polypeptide: Photosystem II reaction center protein K (54 aa).

Residues Met1–Gly17 constitute a propeptide that is removed on maturation. A helical transmembrane segment spans residues Ile29–Ala49.

Belongs to the PsbK family. As to quaternary structure, PSII is composed of 1 copy each of membrane proteins PsbA, PsbB, PsbC, PsbD, PsbE, PsbF, PsbH, PsbI, PsbJ, PsbK, PsbL, PsbM, PsbT, PsbY, PsbZ, Psb30/Ycf12, at least 3 peripheral proteins of the oxygen-evolving complex and a large number of cofactors. It forms dimeric complexes.

It is found in the plastid. It localises to the chloroplast thylakoid membrane. Its function is as follows. One of the components of the core complex of photosystem II (PSII). PSII is a light-driven water:plastoquinone oxidoreductase that uses light energy to abstract electrons from H(2)O, generating O(2) and a proton gradient subsequently used for ATP formation. It consists of a core antenna complex that captures photons, and an electron transfer chain that converts photonic excitation into a charge separation. The chain is Photosystem II reaction center protein K from Euglena stellata.